Consider the following 111-residue polypeptide: Inner membrane protein H108R (111 aa).

The chain crosses the membrane as a helical span at residues 10–32 (LIVIITILITTRELSTTMLIVSL). Asn-65 carries N-linked (GlcNAc...) asparagine; by host glycosylation.

The protein belongs to the asfivirus H108R family.

Its subcellular location is the virion membrane. The chain is Inner membrane protein H108R from African swine fever virus (isolate Tick/Malawi/Lil 20-1/1983) (ASFV).